The primary structure comprises 79 residues: PEQTAPYGLGNPPRRRRRSLPRRCQCSSARDPSCATFCLRRPWTEARAVPSRKSPADVFQTGKTGATRGELLQRLRDIS.

Positions 1–23 (PEQTAPYGLGNPPRRRRRSLPRR) are disordered. The tract at residues 24-39 (CQCSSARDPSCATFCL) is endothelin-like. The disordered stretch occupies residues 51–79 (SRKSPADVFQTGKTGATRGELLQRLRDIS).

Belongs to the endothelin/sarafotoxin family.

The protein resides in the secreted. Its function is as follows. Endothelins are endothelium-derived vasoconstrictor peptides. This chain is Endothelin-2 (EDN2), found in Macaca fascicularis (Crab-eating macaque).